The chain runs to 313 residues: MTQPIVVAALYKFVTLEDYVNLREPLLQAMVDNGIKGTLLIAEEGINGTVSGSREGIDGLLAWLRNDPRMVDIDHKESYCDEQPFYRTKVKLKKEIVTLGVEGVDPNKKVGTYVEPKDWNALISDPEVLLIDTRNDYEVSIGTFEGAIDPKTTSFREFPDYIKEHFDPAVHKKVAMFCTGGIRCEKASSYMLGEGFEEVYHLKGGILKYLEEVPQEETKWQGDCFVFDNRVTVRHDLSEGDYDQCHACRTPVSVEDRASEHYVAGISCPHCWDTLSEKTRRSAIDRQKQIELAKARNMPHPIGYNYKQASTEA.

In terms of domain architecture, Rhodanese spans 124–218; the sequence is SDPEVLLIDT…YLEEVPQEET (95 aa). The active-site Cysteine persulfide intermediate is Cys178.

Belongs to the TrhO family.

It carries out the reaction uridine(34) in tRNA + AH2 + O2 = 5-hydroxyuridine(34) in tRNA + A + H2O. Catalyzes oxygen-dependent 5-hydroxyuridine (ho5U) modification at position 34 in tRNAs. In Pseudomonas fluorescens (strain Pf0-1), this protein is tRNA uridine(34) hydroxylase.